The primary structure comprises 1033 residues: Error-prone DNA polymerase (1033 aa).

It belongs to the DNA polymerase type-C family. DnaE2 subfamily.

The protein resides in the cytoplasm. It carries out the reaction DNA(n) + a 2'-deoxyribonucleoside 5'-triphosphate = DNA(n+1) + diphosphate. Functionally, DNA polymerase involved in damage-induced mutagenesis and translesion synthesis (TLS). It is not the major replicative DNA polymerase. The protein is Error-prone DNA polymerase of Teredinibacter turnerae (strain ATCC 39867 / T7901).